Here is a 322-residue protein sequence, read N- to C-terminus: Solute carrier family 35 member B1 (322 aa).

Helical transmembrane passes span 12–32 (LRLP…GILQ), 51–71 (FALT…KILI), 85–105 (WLYA…NSAL), 136–156 (YPLA…LFMY), 168–188 (TVGF…LTGV), 210–230 (LWST…WEFL), 243–263 (ILLF…TVVY), and 285–305 (VILF…LVFL). The Di-lysine motif signature appears at 318-322 (KKTSH).

It belongs to the nucleotide-sugar transporter family. SLC35B subfamily.

It localises to the endoplasmic reticulum membrane. It carries out the reaction ADP(in) + ATP(out) = ADP(out) + ATP(in). The catalysed reaction is UDP(out) + ATP(in) = UDP(in) + ATP(out). It catalyses the reaction UTP(out) + ATP(in) = UTP(in) + ATP(out). The enzyme catalyses dATP(out) + ATP(in) = dATP(in) + ATP(out). ATP:ADP antiporter that catalyzes the exchange of ATP and ADP across the endoplasmic reticulum (ER) membrane. Imports ATP from the cytosol to the ER lumen and exports ADP in the opposite direction. Regulates ER energy metabolism and protein biogenesis. Appears to be part of a calcium-dependent ER to cytosol low energy response axis, where calcium efflux from ER to the cytosol triggers ATP import into the ER lumen to maintain sufficient ATP supply. Provides ATP to ER chaperone HSPA5 that drives protein folding and trafficking in the ER. Can transport dATP, UTP or UDP in exchange for ATP, but the physiological relevance of this process remains to be established. The protein is Solute carrier family 35 member B1 (Slc35b1) of Rattus norvegicus (Rat).